Here is a 95-residue protein sequence, read N- to C-terminus: Protein TusB (95 aa).

It belongs to the DsrH/TusB family. Heterohexamer, formed by a dimer of trimers. The hexameric TusBCD complex contains 2 copies each of TusB, TusC and TusD. The TusBCD complex interacts with TusE.

Its subcellular location is the cytoplasm. Part of a sulfur-relay system required for 2-thiolation of 5-methylaminomethyl-2-thiouridine (mnm(5)s(2)U) at tRNA wobble positions. The protein is Protein TusB of Shigella flexneri.